A 205-amino-acid polypeptide reads, in one-letter code: Holliday junction branch migration complex subunit RuvA (205 aa).

The interval 1–64 (MIGKLKGTID…EDQLKLFGFL (64 aa)) is domain I. Residues 65-143 (SALEREWFRL…AFVGEMAPSI (79 aa)) are domain II. Residues 144 to 153 (GLKQELGEGV) are flexible linker. Residues 153–205 (VAAAPVSDAVSALTNLGYSRDQAANAVAAALKNGGEGADSARLIRLGLKELSR) are domain III.

Belongs to the RuvA family. Homotetramer. Forms an RuvA(8)-RuvB(12)-Holliday junction (HJ) complex. HJ DNA is sandwiched between 2 RuvA tetramers; dsDNA enters through RuvA and exits via RuvB. An RuvB hexamer assembles on each DNA strand where it exits the tetramer. Each RuvB hexamer is contacted by two RuvA subunits (via domain III) on 2 adjacent RuvB subunits; this complex drives branch migration. In the full resolvosome a probable DNA-RuvA(4)-RuvB(12)-RuvC(2) complex forms which resolves the HJ.

The protein localises to the cytoplasm. In terms of biological role, the RuvA-RuvB-RuvC complex processes Holliday junction (HJ) DNA during genetic recombination and DNA repair, while the RuvA-RuvB complex plays an important role in the rescue of blocked DNA replication forks via replication fork reversal (RFR). RuvA specifically binds to HJ cruciform DNA, conferring on it an open structure. The RuvB hexamer acts as an ATP-dependent pump, pulling dsDNA into and through the RuvAB complex. HJ branch migration allows RuvC to scan DNA until it finds its consensus sequence, where it cleaves and resolves the cruciform DNA. The chain is Holliday junction branch migration complex subunit RuvA from Sinorhizobium medicae (strain WSM419) (Ensifer medicae).